The sequence spans 196 residues: dITP/XTP pyrophosphatase (196 aa).

10 to 15 (SGNKGK) serves as a coordination point for substrate. Mg(2+)-binding residues include Glu-40 and Asp-69. The Proton acceptor role is filled by Asp-69. Substrate is bound by residues Ser-70, 147-150 (FGYD), Lys-170, and 175-176 (HR).

Belongs to the HAM1 NTPase family. As to quaternary structure, homodimer. Mg(2+) serves as cofactor.

The enzyme catalyses XTP + H2O = XMP + diphosphate + H(+). The catalysed reaction is dITP + H2O = dIMP + diphosphate + H(+). It carries out the reaction ITP + H2O = IMP + diphosphate + H(+). Its function is as follows. Pyrophosphatase that catalyzes the hydrolysis of nucleoside triphosphates to their monophosphate derivatives, with a high preference for the non-canonical purine nucleotides XTP (xanthosine triphosphate), dITP (deoxyinosine triphosphate) and ITP. Seems to function as a house-cleaning enzyme that removes non-canonical purine nucleotides from the nucleotide pool, thus preventing their incorporation into DNA/RNA and avoiding chromosomal lesions. This is dITP/XTP pyrophosphatase from Prochlorococcus marinus (strain NATL1A).